A 201-amino-acid polypeptide reads, in one-letter code: MARYTGPATRKSRRLRVDLVGGDMAFERRPYPPGQAGRARIKESEYLLQLQEKQKARFIYGVMEKQFRRYYAEANRRAGKTGENLVVLLESRLDNVVYRAGLANTRRQARQLVSHGHFTVNGKAIDVPSFRVSQYDIINVREKSQKMNWFEEAQDNLADAVVPAWLQVVPENLRILVHQLPERAQIDIPLQEQLIVEFYSK.

Positions 91-151 constitute an S4 RNA-binding domain; that stretch reads SRLDNVVYRA…EKSQKMNWFE (61 aa).

It belongs to the universal ribosomal protein uS4 family. In terms of assembly, part of the 30S ribosomal subunit. Contacts protein S5. The interaction surface between S4 and S5 is involved in control of translational fidelity.

One of the primary rRNA binding proteins, it binds directly to 16S rRNA where it nucleates assembly of the body of the 30S subunit. Its function is as follows. With S5 and S12 plays an important role in translational accuracy. This Corynebacterium glutamicum (strain ATCC 13032 / DSM 20300 / JCM 1318 / BCRC 11384 / CCUG 27702 / LMG 3730 / NBRC 12168 / NCIMB 10025 / NRRL B-2784 / 534) protein is Small ribosomal subunit protein uS4.